The following is a 366-amino-acid chain: Protein U1 (366 aa).

The protein belongs to the herpesviridae US22 family.

The chain is Protein U1 (U1) from Human herpesvirus 6A (strain Uganda-1102) (HHV-6 variant A).